Consider the following 283-residue polypeptide: Thymidylate synthase (283 aa).

Arg22 is a binding site for dUMP. The Nucleophile role is filled by Cys160. DUMP contacts are provided by residues 180–183 (RSCD), Asn191, and 221–223 (HIY). Asp183 is a binding site for (6R)-5,10-methylene-5,6,7,8-tetrahydrofolate. Ser282 serves as a coordination point for (6R)-5,10-methylene-5,6,7,8-tetrahydrofolate.

Belongs to the thymidylate synthase family. Bacterial-type ThyA subfamily. Homodimer.

Its subcellular location is the cytoplasm. The catalysed reaction is dUMP + (6R)-5,10-methylene-5,6,7,8-tetrahydrofolate = 7,8-dihydrofolate + dTMP. It functions in the pathway pyrimidine metabolism; dTTP biosynthesis. Its function is as follows. Catalyzes the reductive methylation of 2'-deoxyuridine-5'-monophosphate (dUMP) to 2'-deoxythymidine-5'-monophosphate (dTMP) while utilizing 5,10-methylenetetrahydrofolate (mTHF) as the methyl donor and reductant in the reaction, yielding dihydrofolate (DHF) as a by-product. This enzymatic reaction provides an intracellular de novo source of dTMP, an essential precursor for DNA biosynthesis. This Haemophilus influenzae (strain 86-028NP) protein is Thymidylate synthase.